A 452-amino-acid polypeptide reads, in one-letter code: 1,3-beta-glucanosyltransferase gel1 (452 aa).

The signal sequence occupies residues 1 to 19; the sequence is MKASAVTAALAVGASTVLA. A disulfide bridge links C71 with C100. Residues Y89, N159, E160, D201, and R206 each coordinate (1,3-beta-D-glucosyl)n. E160 functions as the Proton donor in the catalytic mechanism. 2 cysteine pairs are disulfide-bonded: C215/C345 and C233/C264. N249 carries N-linked (GlcNAc...) asparagine glycosylation. E261 serves as the catalytic Nucleophile. Y292 serves as a coordination point for (1,3-beta-D-glucosyl)n. The segment covering 325 to 340 has biased composition (polar residues); sequence EKTSNPSGDGNYNKTG. The tract at residues 325-419 is disordered; the sequence is EKTSNPSGDG…SGTSTSSKGA (95 aa). N-linked (GlcNAc...) asparagine glycosylation is present at N337. Residues 393–419 are compositionally biased toward low complexity; that stretch reads STATAEPGSGSATGSSSSGTSTSSKGA. Residue A419 is the site of GPI-like-anchor amidated alanine attachment. Residues 420–452 constitute a propeptide, removed in mature form; sequence AAGLTVPSLTMAPVVVGAVTLLSTVFGAGLVLL.

The protein belongs to the glycosyl hydrolase 72 family. The GPI-like anchor contains a phosphoceramide lipid group. The anchor position has not been determined.

The protein resides in the cell membrane. Splits internally a 1,3-beta-glucan molecule and transfers the newly generated reducing end (the donor) to the non-reducing end of another 1,3-beta-glucan molecule (the acceptor) forming a 1,3-beta linkage, resulting in the elongation of 1,3-beta-glucan chains in the cell wall. Involved in cell wall morphogenesis. The sequence is that of 1,3-beta-glucanosyltransferase gel1 (gel1) from Aspergillus fumigatus (strain CBS 144.89 / FGSC A1163 / CEA10) (Neosartorya fumigata).